The following is a 311-amino-acid chain: MQQNQEITKKEQYNLNKLQKRLRRNVGQAIADFNMIEEGDRIMVCLSGGKDSYTMLEILRNLQQSAPVKFSLVAVNLDQKQPGFPEHILPEYLEQQGVEYKIVEENTYGIVKDKIPEGKTTCSLCSRLRRGILYRTATELGATKIALGHHRDDILQTLFLNMFYGGKMKGMPPKLMSDDGKHIVIRPLAYCREKDIERFAQAREYPIIPCNLCGSQPNLQRQVIGDMLRDWDKRYPGRIETMFSAMQNVVPSHLSDVELFDFKGIQHGSEVVAGGDLAFDREDIPMQPAGWQPEEDDSQLDEMRLNIVEVK.

Residues 47–52 (SGGKDS) carry the PP-loop motif motif. Positions 122, 125, and 213 each coordinate [4Fe-4S] cluster.

The protein belongs to the TtcA family. Homodimer. Mg(2+) is required as a cofactor. [4Fe-4S] cluster serves as cofactor.

Its subcellular location is the cytoplasm. It catalyses the reaction cytidine(32) in tRNA + S-sulfanyl-L-cysteinyl-[cysteine desulfurase] + AH2 + ATP = 2-thiocytidine(32) in tRNA + L-cysteinyl-[cysteine desulfurase] + A + AMP + diphosphate + H(+). The protein operates within tRNA modification. Catalyzes the ATP-dependent 2-thiolation of cytidine in position 32 of tRNA, to form 2-thiocytidine (s(2)C32). The sulfur atoms are provided by the cysteine/cysteine desulfurase (IscS) system. The chain is tRNA-cytidine(32) 2-sulfurtransferase from Enterobacter sp. (strain 638).